Here is a 380-residue protein sequence, read N- to C-terminus: D-alanine--D-alanine ligase (380 aa).

The ATP-grasp domain maps to 142–348 (KQVLTAHGIR…YADLIDRLIE (207 aa)). Residue 172–227 (QSRLGDNVFIKPANQGSSVGIHKASNVQEYLDGVADAFRYDYKVLVEQTIDGPQEV) coordinates ATP. 3 residues coordinate Mg(2+): D302, E315, and N317.

Belongs to the D-alanine--D-alanine ligase family. Mg(2+) is required as a cofactor. It depends on Mn(2+) as a cofactor.

The protein localises to the cytoplasm. The catalysed reaction is 2 D-alanine + ATP = D-alanyl-D-alanine + ADP + phosphate + H(+). The protein operates within cell wall biogenesis; peptidoglycan biosynthesis. Its function is as follows. Cell wall formation. The chain is D-alanine--D-alanine ligase from Levilactobacillus brevis (strain ATCC 367 / BCRC 12310 / CIP 105137 / JCM 1170 / LMG 11437 / NCIMB 947 / NCTC 947) (Lactobacillus brevis).